The sequence spans 431 residues: Enolase (431 aa).

Q168 lines the (2R)-2-phosphoglycerate pocket. The active-site Proton donor is the E210. Mg(2+)-binding residues include D247, E291, and D318. Positions 343, 372, 373, and 394 each coordinate (2R)-2-phosphoglycerate. The Proton acceptor role is filled by K343.

The protein belongs to the enolase family. As to quaternary structure, component of the RNA degradosome, a multiprotein complex involved in RNA processing and mRNA degradation. Requires Mg(2+) as cofactor.

The protein localises to the cytoplasm. The protein resides in the secreted. It localises to the cell surface. The enzyme catalyses (2R)-2-phosphoglycerate = phosphoenolpyruvate + H2O. Its pathway is carbohydrate degradation; glycolysis; pyruvate from D-glyceraldehyde 3-phosphate: step 4/5. In terms of biological role, catalyzes the reversible conversion of 2-phosphoglycerate (2-PG) into phosphoenolpyruvate (PEP). It is essential for the degradation of carbohydrates via glycolysis. The polypeptide is Enolase (Acinetobacter baylyi (strain ATCC 33305 / BD413 / ADP1)).